The following is a 171-amino-acid chain: Lipoprotein signal peptidase (171 aa).

A run of 3 helical transmembrane segments spans residues 12–32, 67–87, and 93–113; these read WYWVAVLVFFADQLSKQWVLA, WQRWLFTIVAVGFSTLLTVWL, and SLLKLNLAYTLVIGGALGNLV. Catalysis depends on residues Asp123 and Asp141. Residues 137–157 traverse the membrane as a helical segment; that stretch reads FNIADSAICIGAVLIIWDAFL.

The protein belongs to the peptidase A8 family.

Its subcellular location is the cell inner membrane. It catalyses the reaction Release of signal peptides from bacterial membrane prolipoproteins. Hydrolyzes -Xaa-Yaa-Zaa-|-(S,diacylglyceryl)Cys-, in which Xaa is hydrophobic (preferably Leu), and Yaa (Ala or Ser) and Zaa (Gly or Ala) have small, neutral side chains.. Its pathway is protein modification; lipoprotein biosynthesis (signal peptide cleavage). In terms of biological role, this protein specifically catalyzes the removal of signal peptides from prolipoproteins. This is Lipoprotein signal peptidase from Shewanella baltica (strain OS223).